Consider the following 57-residue polypeptide: Large ribosomal subunit protein bL32 (57 aa).

The protein belongs to the bacterial ribosomal protein bL32 family.

The chain is Large ribosomal subunit protein bL32 from Ureaplasma parvum serovar 3 (strain ATCC 27815 / 27 / NCTC 11736).